Reading from the N-terminus, the 442-residue chain is Cysteine proteinase 4 (442 aa).

The N-terminal stretch at M1–A17 is a signal peptide. Positions K18 to P111 are cleaved as a propeptide — activation peptide. Intrachain disulfides connect C132–C178 and C169–C212. C135 is a catalytic residue. 2 N-linked (GlcNAc...) asparagine glycosylation sites follow: N228 and N254. C270 and C428 are oxidised to a cystine. The active site involves H277. The tract at residues S286–A396 is disordered. The span at G287–G376 shows a compositional bias: low complexity. The span at S377–S391 shows a compositional bias: gly residues. N406 is a catalytic residue.

Belongs to the peptidase C1 family. Post-translationally, glycosylated; contains GlcNAc-alpha-1-P-Ser residues and fucose.

It is found in the lysosome. The sequence is that of Cysteine proteinase 4 (cprD) from Dictyostelium discoideum (Social amoeba).